The chain runs to 425 residues: uncharacterized protein (425 aa).

The segment at 135–202 (KEQEILGCSH…AAQYCKYCKN (68 aa)) adopts a CHY-type zinc-finger fold. Zn(2+) contacts are provided by cysteine 142, histidine 144, cysteine 153, cysteine 156, cysteine 162, cysteine 165, histidine 166, histidine 172, cysteine 184, cysteine 187, cysteine 197, cysteine 200, cysteine 209, cysteine 212, histidine 225, cysteine 226, cysteine 229, cysteine 232, histidine 244, cysteine 245, cysteine 248, cysteine 251, histidine 260, and cysteine 262. The segment at 204 to 270 (MGRYYCNKCK…RCIERSTDCN (67 aa)) adopts a CTCHY-type zinc-finger fold. The segment at 271–313 (CPICGEYMFNSRERVIFLSCSHPLHQRCHEEYIRTNYRCPTCY) adopts an RING-type; atypical zinc-finger fold.

This is an uncharacterized protein from Schizosaccharomyces pombe (strain 972 / ATCC 24843) (Fission yeast).